Reading from the N-terminus, the 684-residue chain is Hydroxyproline O-galactosyltransferase GALT2 (684 aa).

Topologically, residues 1-22 (MKRVKSESFRGVYSSRRFKLSH) are cytoplasmic. The chain crosses the membrane as a helical; Signal-anchor for type II membrane protein span at residues 23–43 (FLLAIAGFYLVFLAFKFPHFI). Residues 44 to 684 (EMVAMLSGDT…KGRPQCCNFR (641 aa)) lie on the Lumenal side of the membrane. The disordered stretch occupies residues 80-102 (KLEDEDHQSGPSTTQKVSPEEKI). N-linked (GlcNAc...) asparagine glycosylation is found at N103, N127, and N162. Residues 191 to 405 (RIMLLPCGLA…DVDIHSIHAT (215 aa)) form the Galectin domain. N524 and N632 each carry an N-linked (GlcNAc...) asparagine glycan.

This sequence belongs to the glycosyltransferase 31 family. The cofactor is Mn(2+). In terms of tissue distribution, expressed in stems and at lower levels in cauline leaves and siliques.

The protein resides in the golgi apparatus membrane. It participates in protein modification; protein glycosylation. Functionally, possesses hydroxyproline O-galactosyltransferase activity. Transfers galactose from UDP-galactose to hydroxyproline residues in the arabinogalactan proteins (AGPs). Is specific for AGPs containing non-contiguous peptidyl hydroxyproline residues. Utilizes UDP-galactose solely as sugar donor. The addition of galactose onto the peptidyl hydroxyproline residues in AGP core proteins represents the first committed step in arabinogalactan polysaccharide addition. AGP glycans play essential roles in both vegetative and reproductive plant growth. The polypeptide is Hydroxyproline O-galactosyltransferase GALT2 (Arabidopsis thaliana (Mouse-ear cress)).